We begin with the raw amino-acid sequence, 727 residues long: Polyribonucleotide nucleotidyltransferase (727 aa).

2 residues coordinate Mg(2+): Asp-488 and Asp-494. The region spanning 555–614 (PKLYTMKINPEKIRDVIGKGGATIRALTDETGCQINIEEDGTITIAATEAAKADEAKRRI) is the KH domain. Positions 624–692 (GKIYEGPVTK…DKGRVKLSMK (69 aa)) constitute an S1 motif domain. The disordered stretch occupies residues 691–727 (MKALADRPAGDSGRPAPAERGERRERRDGGASEQQQQ). The span at 707 to 720 (PAERGERRERRDGG) shows a compositional bias: basic and acidic residues.

This sequence belongs to the polyribonucleotide nucleotidyltransferase family. Requires Mg(2+) as cofactor.

It is found in the cytoplasm. It carries out the reaction RNA(n+1) + phosphate = RNA(n) + a ribonucleoside 5'-diphosphate. Its function is as follows. Involved in mRNA degradation. Catalyzes the phosphorolysis of single-stranded polyribonucleotides processively in the 3'- to 5'-direction. The chain is Polyribonucleotide nucleotidyltransferase from Acidovorax sp. (strain JS42).